Reading from the N-terminus, the 360-residue chain is Phospho-N-acetylmuramoyl-pentapeptide-transferase (360 aa).

10 helical membrane passes run 27–47 (GAFM…INVL), 71–91 (TPTM…LLWA), 93–113 (WDNP…LIGF), 134–154 (LALG…NHPA), 168–188 (TLIN…VGSA), 199–219 (GLAI…AYAV), 239–259 (ILIF…YNAP), 262–282 (AVFM…AIAV), 288–308 (LVLA…IIQV), and 337–357 (TIVI…LATL).

The protein belongs to the glycosyltransferase 4 family. MraY subfamily. It depends on Mg(2+) as a cofactor.

The protein resides in the cell inner membrane. It carries out the reaction UDP-N-acetyl-alpha-D-muramoyl-L-alanyl-gamma-D-glutamyl-meso-2,6-diaminopimeloyl-D-alanyl-D-alanine + di-trans,octa-cis-undecaprenyl phosphate = di-trans,octa-cis-undecaprenyl diphospho-N-acetyl-alpha-D-muramoyl-L-alanyl-D-glutamyl-meso-2,6-diaminopimeloyl-D-alanyl-D-alanine + UMP. Its pathway is cell wall biogenesis; peptidoglycan biosynthesis. Functionally, catalyzes the initial step of the lipid cycle reactions in the biosynthesis of the cell wall peptidoglycan: transfers peptidoglycan precursor phospho-MurNAc-pentapeptide from UDP-MurNAc-pentapeptide onto the lipid carrier undecaprenyl phosphate, yielding undecaprenyl-pyrophosphoryl-MurNAc-pentapeptide, known as lipid I. This chain is Phospho-N-acetylmuramoyl-pentapeptide-transferase, found in Ruegeria pomeroyi (strain ATCC 700808 / DSM 15171 / DSS-3) (Silicibacter pomeroyi).